We begin with the raw amino-acid sequence, 256 residues long: Pimeloyl-[acyl-carrier protein] methyl ester esterase (256 aa).

Positions 15–242 (HLVLLHGWGL…AAHAPFISHP (228 aa)) constitute an AB hydrolase-1 domain. Substrate-binding positions include Trp22, 82–83 (SL), and 143–147 (FLALQ). The Nucleophile role is filled by Ser82. Catalysis depends on residues Asp207 and His235. Substrate is bound at residue His235.

Belongs to the AB hydrolase superfamily. Carboxylesterase BioH family. As to quaternary structure, monomer.

It localises to the cytoplasm. The enzyme catalyses 6-carboxyhexanoyl-[ACP] methyl ester + H2O = 6-carboxyhexanoyl-[ACP] + methanol + H(+). It participates in cofactor biosynthesis; biotin biosynthesis. Its function is as follows. The physiological role of BioH is to remove the methyl group introduced by BioC when the pimeloyl moiety is complete. It allows to synthesize pimeloyl-ACP via the fatty acid synthetic pathway through the hydrolysis of the ester bonds of pimeloyl-ACP esters. This chain is Pimeloyl-[acyl-carrier protein] methyl ester esterase, found in Escherichia coli O6:K15:H31 (strain 536 / UPEC).